The primary structure comprises 121 residues: Mu-hexatoxin-Mg1a (121 aa).

Positions 1-20 (MMTLSPFLLLLIAAVVIGNA) are cleaved as a signal peptide. Positions 21–80 (SEGEVKNEFEERLKDEFKDPSRSEVAEVILLRELEVLEETLFGKEMTSDTEENRNSREKR) are excised as a propeptide. 3 cysteine pairs are disulfide-bonded: Cys81–Cys95, Cys88–Cys102, and Cys94–Cys116. A Lysine amide modification is found at Lys120.

This sequence belongs to the neurotoxin 14 (magi-1) family. 09 (magi-1) subfamily. Expressed by the venom gland.

The protein resides in the secreted. Insecticidal neurotoxin. Shows competition for site 3 of insect voltage-gated sodium channels (Nav). Induces flaccid paralysis when injected into lepidopteran larvae. Is not toxic to mice when injected intracranially at 20 pmol/g. The polypeptide is Mu-hexatoxin-Mg1a (Macrothele gigas (Japanese funnel web spider)).